We begin with the raw amino-acid sequence, 145 residues long: Allergen MAG29 (145 aa).

2 disordered regions span residues 1-21 (KDDI…DDKQ) and 103-145 (AGGA…EEVD). The span at 104 to 137 (GGAGAGGMPGGFPGGFPGTDGSGGGAAGGDGGKS) shows a compositional bias: gly residues.

This sequence belongs to the heat shock protein 70 family.

The polypeptide is Allergen MAG29 (MAG29) (Dermatophagoides farinae (American house dust mite)).